The sequence spans 548 residues: Thermosome subunit beta (548 aa).

The protein belongs to the TCP-1 chaperonin family. As to quaternary structure, forms a Heterooligomeric complex of two stacked eight-membered rings.

In terms of biological role, molecular chaperone; binds unfolded polypeptides in vitro, and has a weak ATPase activity. This is Thermosome subunit beta (thsB) from Aeropyrum pernix (strain ATCC 700893 / DSM 11879 / JCM 9820 / NBRC 100138 / K1).